The chain runs to 243 residues: MAVNNISKKRKFVGDGVFKAELNEFLTRELAEDGYSGVEVRVTPTRSEIIIMATRTQSVLGEKGRRIRELTSVVQKRFNIPEQSVELYAEKVATRGLCAIAQAESLRYKLIGGLAVRRACYGVLRFIMESGARGCEVVVSGKLRGQRAKSMKFVDGLMIHSGDPCNDYVNTATRHVLLRQGVLGIKVKIMLPWDQQGKNGPKKPQPDHILVTEPKDEPAPLEPTSDIRSLAPAPLPQPVAAVA.

The 72-residue stretch at 22 to 93 (LNEFLTRELA…SVELYAEKVA (72 aa)) folds into the KH type-2 domain. Residues 195-243 (QQGKNGPKKPQPDHILVTEPKDEPAPLEPTSDIRSLAPAPLPQPVAAVA) form a disordered region.

This sequence belongs to the universal ribosomal protein uS3 family.

The polypeptide is Small ribosomal subunit protein uS3 (RpS3) (Manduca sexta (Tobacco hawkmoth)).